The chain runs to 560 residues: Mitogen-activated protein kinase kinase kinase 3 (560 aa).

Positions 70-91 are disordered; it reads KRQSSSSSDNTSDKEEVETEET. The Protein kinase domain occupies 303–557; it reads WLKGQLLGRG…AAELLHHPFV (255 aa). Residues 309 to 317 and lysine 331 contribute to the ATP site; that span reads LGRGSYASV. The active-site Proton acceptor is the aspartate 426.

It belongs to the protein kinase superfamily. STE Ser/Thr protein kinase family. MAP kinase kinase kinase subfamily. As to expression, expressed at low levels in roots, stems, siliques, leaves, seedlings and flower buds.

The catalysed reaction is L-seryl-[protein] + ATP = O-phospho-L-seryl-[protein] + ADP + H(+). The enzyme catalyses L-threonyl-[protein] + ATP = O-phospho-L-threonyl-[protein] + ADP + H(+). The protein is Mitogen-activated protein kinase kinase kinase 3 of Arabidopsis thaliana (Mouse-ear cress).